The chain runs to 355 residues: Protein RecA (355 aa).

Gly-67–Thr-74 serves as a coordination point for ATP.

The protein belongs to the RecA family.

It is found in the cytoplasm. Its function is as follows. Can catalyze the hydrolysis of ATP in the presence of single-stranded DNA, the ATP-dependent uptake of single-stranded DNA by duplex DNA, and the ATP-dependent hybridization of homologous single-stranded DNAs. It interacts with LexA causing its activation and leading to its autocatalytic cleavage. In Shewanella baltica (strain OS223), this protein is Protein RecA.